The following is a 358-amino-acid chain: GTPase Obg (358 aa).

Positions 1-159 (MKFVDEVTIR…RNLHLELRLL (159 aa)) constitute an Obg domain. In terms of domain architecture, OBG-type G spans 160–334 (ADVGLLGMPN…LAQDVMNRLE (175 aa)). GTP contacts are provided by residues 166–173 (GMPNAGKS), 191–195 (FTTLY), 213–216 (DIPG), 284–287 (NKLD), and 315–317 (SAL). Mg(2+)-binding residues include Ser173 and Thr193. The segment at 337-358 (DEEAREAGERARREQRQEEGPE) is disordered. The span at 341-358 (REAGERARREQRQEEGPE) shows a compositional bias: basic and acidic residues.

The protein belongs to the TRAFAC class OBG-HflX-like GTPase superfamily. OBG GTPase family. Monomer. The cofactor is Mg(2+).

It localises to the cytoplasm. Its function is as follows. An essential GTPase which binds GTP, GDP and possibly (p)ppGpp with moderate affinity, with high nucleotide exchange rates and a fairly low GTP hydrolysis rate. Plays a role in control of the cell cycle, stress response, ribosome biogenesis and in those bacteria that undergo differentiation, in morphogenesis control. This chain is GTPase Obg, found in Alkalilimnicola ehrlichii (strain ATCC BAA-1101 / DSM 17681 / MLHE-1).